The primary structure comprises 274 residues: Bis(5'-nucleosyl)-tetraphosphatase, symmetrical (274 aa).

The protein belongs to the Ap4A hydrolase family.

It catalyses the reaction P(1),P(4)-bis(5'-adenosyl) tetraphosphate + H2O = 2 ADP + 2 H(+). Functionally, hydrolyzes diadenosine 5',5'''-P1,P4-tetraphosphate to yield ADP. The chain is Bis(5'-nucleosyl)-tetraphosphatase, symmetrical from Shewanella baltica (strain OS155 / ATCC BAA-1091).